Reading from the N-terminus, the 709-residue chain is Twinkle homolog protein, chloroplastic/mitochondrial (709 aa).

Residues 1–16 (MRFLLRLPQIHFRKLS) constitute a chloroplast and mitochondrion transit peptide. A Toprim domain is found at 280-385 (SEVIIVEGEI…KKSEDEHFKD (106 aa)). Mg(2+) contacts are provided by Glu286, Asp348, and Asp350. Residues 430–698 (THGHEYGVST…GSYSDSPVTP (269 aa)) enclose the SF4 helicase domain. Residue 460–467 (GIPNSGKS) coordinates ATP.

Requires Mg(2+) as cofactor. In terms of tissue distribution, expressed in young leaves and shoot apex tissues. Detected in developing tissues such as cotyledons, sepals, pistils and inflorescences. Nearly undetectable in mature leaves.

The protein localises to the plastid. It is found in the chloroplast. It localises to the mitochondrion. The enzyme catalyses ATP + H2O = ADP + phosphate + H(+). Has both DNA primase and DNA helicase activities and may be involved in organelle DNA replication. Capable of producing RNA primers of 9 to 18 bases from a single-stranded DNA template. This chain is Twinkle homolog protein, chloroplastic/mitochondrial, found in Arabidopsis thaliana (Mouse-ear cress).